We begin with the raw amino-acid sequence, 249 residues long: Dof zinc finger protein DOF4.5 (249 aa).

Residues 25–79 (RVCARCDSDNTKFCYYNNYCEFQPRYFCKNCRRYWTHGGALRNIPIGGSSRAKRA) form a Dof-type zinc finger. Zn(2+) is bound by residues C27, C30, C52, and C55.

It localises to the nucleus. Transcription factor that binds specifically to a 5'-AA[AG]G-3' consensus core sequence. This is Dof zinc finger protein DOF4.5 (DOF4.5) from Arabidopsis thaliana (Mouse-ear cress).